A 343-amino-acid polypeptide reads, in one-letter code: uncharacterized protein (343 aa).

Residue 33–40 (GPKSSGKS) participates in ATP binding.

It belongs to the archaeal ATPase family.

This is an uncharacterized protein from Methanocaldococcus jannaschii (strain ATCC 43067 / DSM 2661 / JAL-1 / JCM 10045 / NBRC 100440) (Methanococcus jannaschii).